The chain runs to 1076 residues: Bifunctional glutamine synthetase adenylyltransferase/adenylyl-removing enzyme (1076 aa).

The tract at residues M1–M521 is adenylyl removase. Positions V524–R1076 are adenylyl transferase. A compositionally biased stretch (low complexity) spans T1042–P1056. The disordered stretch occupies residues T1042–R1076.

This sequence belongs to the GlnE family. It depends on Mg(2+) as a cofactor.

It carries out the reaction [glutamine synthetase]-O(4)-(5'-adenylyl)-L-tyrosine + phosphate = [glutamine synthetase]-L-tyrosine + ADP. The catalysed reaction is [glutamine synthetase]-L-tyrosine + ATP = [glutamine synthetase]-O(4)-(5'-adenylyl)-L-tyrosine + diphosphate. Involved in the regulation of glutamine synthetase GlnA, a key enzyme in the process to assimilate ammonia. When cellular nitrogen levels are high, the C-terminal adenylyl transferase (AT) inactivates GlnA by covalent transfer of an adenylyl group from ATP to specific tyrosine residue of GlnA, thus reducing its activity. Conversely, when nitrogen levels are low, the N-terminal adenylyl removase (AR) activates GlnA by removing the adenylyl group by phosphorolysis, increasing its activity. The regulatory region of GlnE binds the signal transduction protein PII (GlnB) which indicates the nitrogen status of the cell. The protein is Bifunctional glutamine synthetase adenylyltransferase/adenylyl-removing enzyme of Bifidobacterium longum (strain NCC 2705).